A 408-amino-acid chain; its full sequence is Acetate kinase (408 aa).

Asn7 lines the Mg(2+) pocket. Residue Lys14 participates in ATP binding. A substrate-binding site is contributed by Arg91. Asp148 (proton donor/acceptor) is an active-site residue. ATP-binding positions include 208 to 212 (HLGNG), 283 to 285 (DFR), and 331 to 335 (GIGEN). Glu384 is a binding site for Mg(2+).

The protein belongs to the acetokinase family. Homodimer. Requires Mg(2+) as cofactor. Mn(2+) serves as cofactor.

The protein resides in the cytoplasm. The catalysed reaction is acetate + ATP = acetyl phosphate + ADP. It functions in the pathway metabolic intermediate biosynthesis; acetyl-CoA biosynthesis; acetyl-CoA from acetate: step 1/2. In terms of biological role, catalyzes the formation of acetyl phosphate from acetate and ATP. Can also catalyze the reverse reaction. This is Acetate kinase from Methanosarcina mazei (strain ATCC BAA-159 / DSM 3647 / Goe1 / Go1 / JCM 11833 / OCM 88) (Methanosarcina frisia).